A 205-amino-acid chain; its full sequence is Small ribosomal subunit protein uS4 (205 aa).

The disordered stretch occupies residues 26-47 (PVNKREYGPGQHGQRRKQKPSD). One can recognise an S4 RNA-binding domain in the interval 94-154 (RRLDAVVYRL…EKSKHLAIVL (61 aa)).

It belongs to the universal ribosomal protein uS4 family. As to quaternary structure, part of the 30S ribosomal subunit. Contacts protein S5. The interaction surface between S4 and S5 is involved in control of translational fidelity.

Functionally, one of the primary rRNA binding proteins, it binds directly to 16S rRNA where it nucleates assembly of the body of the 30S subunit. In terms of biological role, with S5 and S12 plays an important role in translational accuracy. The polypeptide is Small ribosomal subunit protein uS4 (Gluconacetobacter diazotrophicus (strain ATCC 49037 / DSM 5601 / CCUG 37298 / CIP 103539 / LMG 7603 / PAl5)).